A 591-amino-acid polypeptide reads, in one-letter code: Aspartate--tRNA ligase (591 aa).

E171 contacts L-aspartate. Residues 195 to 198 form an aspartate region; it reads QLFK. Residue R217 coordinates L-aspartate. ATP-binding positions include 217–219 and Q226; that span reads RDE. H448 is a binding site for L-aspartate. Residue E482 coordinates ATP. Position 489 (R489) interacts with L-aspartate. Position 534–537 (534–537) interacts with ATP; sequence GLDR.

This sequence belongs to the class-II aminoacyl-tRNA synthetase family. Type 1 subfamily. In terms of assembly, homodimer.

The protein localises to the cytoplasm. The enzyme catalyses tRNA(Asp) + L-aspartate + ATP = L-aspartyl-tRNA(Asp) + AMP + diphosphate. In terms of biological role, catalyzes the attachment of L-aspartate to tRNA(Asp) in a two-step reaction: L-aspartate is first activated by ATP to form Asp-AMP and then transferred to the acceptor end of tRNA(Asp). The polypeptide is Aspartate--tRNA ligase (Aliivibrio salmonicida (strain LFI1238) (Vibrio salmonicida (strain LFI1238))).